A 281-amino-acid chain; its full sequence is MEEGAALEGVVKLLEAGSVLAVTGAGVSTDSGIPDYRSPRGSLNQGRPMTYQEFRFDPVASHRYWARSFVGWRVMADAQPNRTHYALVELERAGLLSGIVTQNVDGLHRRAGSENLVALHGDLATIVCLQCGHREARELLDARLDHLNPGYFDSIALDPSAVNPDGDVTLDDHHVQRFTMAGCARCGSVLLKPDVVYFGEPVPSIRKTRVAQLLDGADAVVVAGSSLAVMSGYRIVIEAQRAGKPVAVINGGPGRADHRVDILWRTRVGPAFDQILDALDL.

One can recognise a Deacetylase sirtuin-type domain in the interval 1–281 (MEEGAALEGV…FDQILDALDL (281 aa)). NAD(+) is bound by residues 24 to 44 (GAGV…GSLN) and 102 to 105 (QNVD). Histidine 120 serves as the catalytic Proton acceptor. Zn(2+) contacts are provided by cysteine 128, cysteine 131, cysteine 183, and cysteine 186. Residues 224–226 (GSS), 250–252 (NGG), and valine 268 contribute to the NAD(+) site.

It belongs to the sirtuin family. Class II subfamily. It depends on Zn(2+) as a cofactor.

It is found in the cytoplasm. The enzyme catalyses N(6)-acetyl-L-lysyl-[protein] + NAD(+) + H2O = 2''-O-acetyl-ADP-D-ribose + nicotinamide + L-lysyl-[protein]. In terms of biological role, NAD-dependent protein deacetylase which modulates the activities of several enzymes which are inactive in their acetylated form. This Corynebacterium efficiens (strain DSM 44549 / YS-314 / AJ 12310 / JCM 11189 / NBRC 100395) protein is NAD-dependent protein deacetylase 1.